The chain runs to 31 residues: Cytochrome b6-f complex subunit 6 (31 aa).

Residues 4-24 (ITSYFGFLLAALTITSVLFIG) form a helical membrane-spanning segment.

The protein belongs to the PetL family. The 4 large subunits of the cytochrome b6-f complex are cytochrome b6, subunit IV (17 kDa polypeptide, PetD), cytochrome f and the Rieske protein, while the 4 small subunits are PetG, PetL, PetM and PetN. The complex functions as a dimer.

It is found in the plastid. It localises to the chloroplast thylakoid membrane. Component of the cytochrome b6-f complex, which mediates electron transfer between photosystem II (PSII) and photosystem I (PSI), cyclic electron flow around PSI, and state transitions. PetL is important for photoautotrophic growth as well as for electron transfer efficiency and stability of the cytochrome b6-f complex. The protein is Cytochrome b6-f complex subunit 6 of Lepidium virginicum (Virginia pepperweed).